The sequence spans 804 residues: Protein-lysine N-methyltransferase SMYD4 (804 aa).

Residue R112–A114 participates in S-adenosyl-L-methionine binding. Positions S233–G574 constitute an SET domain. Zn(2+)-binding residues include C296, C299, C309, C312, C318, C322, H331, and C335. The MYND-type zinc-finger motif lies at C296–C335. S-adenosyl-L-methionine contacts are provided by residues N427, N539–H540, Y573, and F595.

It belongs to the class V-like SAM-binding methyltransferase superfamily. Interacts (via MYND-type zinc finger) with HDAC1.

The protein localises to the nucleus. It localises to the cytoplasm. It carries out the reaction L-lysyl-[protein] + S-adenosyl-L-methionine = N(6)-methyl-L-lysyl-[protein] + S-adenosyl-L-homocysteine + H(+). Functionally, protein-lysine N-methyltransferase. Monomethylates PRMT5, modulating its transcriptional activity. May also act as a histone methyltransferase. Plays a critical role in cardiac development. Acts as a key epigenetic regulator of gene expression during cardiac development via its dual activities as a methyltransferase and negative regulator of HDAC1. The polypeptide is Protein-lysine N-methyltransferase SMYD4 (Homo sapiens (Human)).